The primary structure comprises 299 residues: Methionyl-tRNA formyltransferase (299 aa).

109-112 (SLLP) contributes to the (6S)-5,6,7,8-tetrahydrofolate binding site.

Belongs to the Fmt family.

The catalysed reaction is L-methionyl-tRNA(fMet) + (6R)-10-formyltetrahydrofolate = N-formyl-L-methionyl-tRNA(fMet) + (6S)-5,6,7,8-tetrahydrofolate + H(+). Attaches a formyl group to the free amino group of methionyl-tRNA(fMet). The formyl group appears to play a dual role in the initiator identity of N-formylmethionyl-tRNA by promoting its recognition by IF2 and preventing the misappropriation of this tRNA by the elongation apparatus. The polypeptide is Methionyl-tRNA formyltransferase (Wolbachia pipientis subsp. Culex pipiens (strain wPip)).